The sequence spans 754 residues: 5-methyltetrahydropteroyltriglutamate--homocysteine methyltransferase (754 aa).

Residues 17–20 and lysine 117 contribute to the 5-methyltetrahydropteroyltri-L-glutamate site; that span reads RELK. L-homocysteine-binding positions include 431-433 and glutamate 484; that span reads IGS. L-methionine is bound by residues 431–433 and glutamate 484; that span reads IGS. Residues 515 to 516 and tryptophan 561 contribute to the 5-methyltetrahydropteroyltri-L-glutamate site; that span reads RC. Residue aspartate 599 coordinates L-homocysteine. Aspartate 599 contacts L-methionine. Glutamate 605 serves as a coordination point for 5-methyltetrahydropteroyltri-L-glutamate. 3 residues coordinate Zn(2+): histidine 641, cysteine 643, and glutamate 665. The active-site Proton donor is the histidine 694. Position 726 (cysteine 726) interacts with Zn(2+).

Belongs to the vitamin-B12 independent methionine synthase family. Requires Zn(2+) as cofactor.

The catalysed reaction is 5-methyltetrahydropteroyltri-L-glutamate + L-homocysteine = tetrahydropteroyltri-L-glutamate + L-methionine. It participates in amino-acid biosynthesis; L-methionine biosynthesis via de novo pathway; L-methionine from L-homocysteine (MetE route): step 1/1. Catalyzes the transfer of a methyl group from 5-methyltetrahydrofolate to homocysteine resulting in methionine formation. The chain is 5-methyltetrahydropteroyltriglutamate--homocysteine methyltransferase from Salmonella dublin (strain CT_02021853).